Consider the following 196-residue polypeptide: Proteasome subunit beta 1 (196 aa).

A propeptide spans 1 to 6 (MEELPA) (removed in mature form; by autocatalysis). Thr7 (nucleophile) is an active-site residue.

The protein belongs to the peptidase T1B family. The 20S proteasome core is composed of 14 alpha and 14 beta subunits that assemble into four stacked heptameric rings, resulting in a barrel-shaped structure. The two inner rings, each composed of seven catalytic beta subunits, are sandwiched by two outer rings, each composed of seven alpha subunits. The catalytic chamber with the active sites is on the inside of the barrel. Has a gated structure, the ends of the cylinder being occluded by the N-termini of the alpha-subunits. Is capped at one or both ends by the proteasome regulatory ATPase, PAN.

It localises to the cytoplasm. The enzyme catalyses Cleavage of peptide bonds with very broad specificity.. The formation of the proteasomal ATPase PAN-20S proteasome complex, via the docking of the C-termini of PAN into the intersubunit pockets in the alpha-rings, triggers opening of the gate for substrate entry. Interconversion between the open-gate and close-gate conformations leads to a dynamic regulation of the 20S proteasome proteolysis activity. Component of the proteasome core, a large protease complex with broad specificity involved in protein degradation. This chain is Proteasome subunit beta 1, found in Saccharolobus islandicus (strain Y.N.15.51 / Yellowstone #2) (Sulfolobus islandicus).